Reading from the N-terminus, the 381-residue chain is E3 ubiquitin-protein ligase ATL15 (381 aa).

The signal sequence occupies residues 1-23; sequence MVVMSRVSFYSSFLLLLLEVVVA. The helical transmembrane segment at 40–60 threads the bilayer; the sequence is AIIMIVLVSVFFALGCISVYM. Residues 118 to 160 form an RING-type; atypical zinc finger; sequence CPVCLNEFEDDETLRLIPQCCHVFHPGCIDAWLRSQTTCPLCR.

Belongs to the RING-type zinc finger family. ATL subfamily.

It is found in the membrane. It catalyses the reaction S-ubiquitinyl-[E2 ubiquitin-conjugating enzyme]-L-cysteine + [acceptor protein]-L-lysine = [E2 ubiquitin-conjugating enzyme]-L-cysteine + N(6)-ubiquitinyl-[acceptor protein]-L-lysine.. Its pathway is protein modification; protein ubiquitination. In terms of biological role, E3 ubiquitin-protein ligase able to catalyze polyubiquitination with ubiquitin-conjugating enzyme E2 UBC8, UBC10, UBC11, UBC28 and UBC29 in vitro. This Arabidopsis thaliana (Mouse-ear cress) protein is E3 ubiquitin-protein ligase ATL15 (ATL15).